Here is a 310-residue protein sequence, read N- to C-terminus: Probable endonuclease 4 (310 aa).

The tract at residues 1-31 (MNNQQSRGALGTSGATPDLPDATPGLSRNPV) is disordered. The Zn(2+) site is built by histidine 94, histidine 134, glutamate 173, aspartate 207, histidine 210, histidine 244, aspartate 257, histidine 259, and glutamate 289.

This sequence belongs to the AP endonuclease 2 family. The cofactor is Zn(2+).

It carries out the reaction Endonucleolytic cleavage to 5'-phosphooligonucleotide end-products.. Its function is as follows. Endonuclease IV plays a role in DNA repair. It cleaves phosphodiester bonds at apurinic or apyrimidinic (AP) sites, generating a 3'-hydroxyl group and a 5'-terminal sugar phosphate. This chain is Probable endonuclease 4, found in Streptomyces avermitilis (strain ATCC 31267 / DSM 46492 / JCM 5070 / NBRC 14893 / NCIMB 12804 / NRRL 8165 / MA-4680).